The chain runs to 517 residues: Xyloglucan galactosyltransferase XLT2 (517 aa).

A disordered region spans residues 1-31; sequence MLPVSNPSSPEHLLKKSRTPDSTTSIDRKNS. At 1-49 the chain is on the cytoplasmic side; the sequence is MLPVSNPSSPEHLLKKSRTPDSTTSIDRKNSFNSLHSVGNRSSYIAASR. The segment covering 20-31 has biased composition (polar residues); sequence PDSTTSIDRKNS. Residues 50–70 traverse the membrane as a helical; Signal-anchor for type II membrane protein segment; sequence SHCTWLILSLLSLQLILFLTL. Topologically, residues 71-517 are lumenal; the sequence is RSIPFPHRHI…KEQEKWYKWR (447 aa). 4 N-linked (GlcNAc...) asparagine glycosylation sites follow: N250, N288, N377, and N449.

Belongs to the glycosyltransferase 47 family. Interacts with CSLC4, FUT1, XXT2 and XXT5. In terms of tissue distribution, expressed in roots, hypocotyls, cotyledons, leaves, stems and flowers.

The protein resides in the golgi apparatus membrane. Functions in xyloglucan synthesis by adding side chains to the xylosylated glucan backbone. Involved in galactosylating hemicellulose xyloglucan (XyG) at the second position of the XXXG motif to form XLXG. Associates with other xyloglucan-synthesizing enzymes to form multiprotein complexes for xyloglucan synthesis in the Golgi. In Arabidopsis thaliana (Mouse-ear cress), this protein is Xyloglucan galactosyltransferase XLT2.